Reading from the N-terminus, the 440-residue chain is Gap junction alpha-8 protein (440 aa).

The stretch at 2-12 (GDWSFLGNILE) is an intramembrane region. Residues 13-21 (EVNEHSTVI) are Cytoplasmic-facing. A helical membrane pass occupies residues 22–42 (GRVWLTVLFIFRILILGTAAE). The Extracellular portion of the chain corresponds to 43 to 71 (FVWGDEQSDFVCNTQQPGCENVCYDEAFP). Intrachain disulfides connect C54–C201, C61–C195, and C65–C190. Residues 72 to 92 (ISHIRLWVLQIIFVSTPSLMY) traverse the membrane as a helical segment. The Cytoplasmic portion of the chain corresponds to 93–161 (VGHAVHHVRM…GTLLRTYVCH (69 aa)). Positions 111-143 (AEELCQQSRSNGGERVPIAPDQASIRKSSSSSK) are disordered. A helical transmembrane segment spans residues 162–182 (IIFKTLFEVGFIVGHYFLYGF). The Extracellular portion of the chain corresponds to 183-210 (RILPLYRCSRWPCPNVVDCFVSRPTEKT). Residues 211-231 (IFILFMLSVAFVSLFLNIMEM) traverse the membrane as a helical segment. Over 232 to 440 (SHLGMKGIRS…SRARSDDLTI (209 aa)) the chain is Cytoplasmic. Residues 334–440 (GAQEVEREEQ…SRARSDDLTI (107 aa)) form a disordered region. Basic and acidic residues-rich tracts occupy residues 353–364 (VGEKKQEAEKVA) and 375–399 (DGEKVETPGVGKDDEKEELQAEKVT). Residues 423–432 (LSRLSKASSR) are compositionally biased toward low complexity.

The protein belongs to the connexin family. Alpha-type (group II) subfamily. As to quaternary structure, a hemichannel or connexon is composed of a hexamer of connexins. A functional gap junction is formed by the apposition of two hemichannels. Forms heteromeric channels with GJA3. In terms of tissue distribution, detected in eye lens (at protein level).

The protein resides in the cell membrane. It localises to the cell junction. Its subcellular location is the gap junction. Functionally, structural component of eye lens gap junctions. Gap junctions are dodecameric channels that connect the cytoplasm of adjoining cells. They are formed by the docking of two hexameric hemichannels, one from each cell membrane. Small molecules and ions diffuse from one cell to a neighboring cell via the central pore. This Rattus norvegicus (Rat) protein is Gap junction alpha-8 protein (Gja8).